Consider the following 317-residue polypeptide: Acetyl-coenzyme A carboxylase carboxyl transferase subunit alpha (317 aa).

In terms of domain architecture, CoA carboxyltransferase C-terminal spans 40-293 (LEVRVREAIV…GDVIANALGE (254 aa)).

The protein belongs to the AccA family. Acetyl-CoA carboxylase is a heterohexamer composed of biotin carboxyl carrier protein (AccB), biotin carboxylase (AccC) and two subunits each of ACCase subunit alpha (AccA) and ACCase subunit beta (AccD).

The protein localises to the cytoplasm. It catalyses the reaction N(6)-carboxybiotinyl-L-lysyl-[protein] + acetyl-CoA = N(6)-biotinyl-L-lysyl-[protein] + malonyl-CoA. The protein operates within lipid metabolism; malonyl-CoA biosynthesis; malonyl-CoA from acetyl-CoA: step 1/1. In terms of biological role, component of the acetyl coenzyme A carboxylase (ACC) complex. First, biotin carboxylase catalyzes the carboxylation of biotin on its carrier protein (BCCP) and then the CO(2) group is transferred by the carboxyltransferase to acetyl-CoA to form malonyl-CoA. The chain is Acetyl-coenzyme A carboxylase carboxyl transferase subunit alpha from Rhizobium leguminosarum bv. trifolii (strain WSM2304).